The sequence spans 309 residues: General transcription factor IIH subunit 3 (309 aa).

The segment at 269 to 286 (CSVCLSIFCNFSPICTTC) adopts a C4-type zinc-finger fold.

This sequence belongs to the TFB4 family. In terms of assembly, part of a TFIID-containing RNA polymerase II pre-initiation complex that is composed of TBP and at least GTF2A1, GTF2A2, GTF2E1, GTF2E2, GTF2F1, GTF2H2, GTF2H3, GTF2H4, GTF2H5, GTF2B, TCEA1, ERCC2, ERCC3, TAF1, TAF2, TAF3, TAF4, TAF5, TAF6, TAF7, TAF8, TAF9, TAF10, TAF11, TAF12 and TAF13. Component of the 7-subunit TFIIH core complex composed of XPB/ERCC3, XPD/ERCC2, GTF2H1, GTF2H2, GTF2H3, GTF2H4 and GTF2H5, which is active in NER. The core complex associates with the 3-subunit CDK-activating kinase (CAK) module composed of CCNH/cyclin H, CDK7 and MNAT1 to form the 10-subunit holoenzyme (holo-TFIIH) active in transcription. Interacts with RARA; the interaction requires prior phosphorylation of RARA on 'Ser-369' which then enhances interaction of RARA with CDK7.

The protein resides in the nucleus. In terms of biological role, component of the general transcription and DNA repair factor IIH (TFIIH) core complex, which is involved in general and transcription-coupled nucleotide excision repair (NER) of damaged DNA and, when complexed to CAK, in RNA transcription by RNA polymerase II. In NER, TFIIH acts by opening DNA around the lesion to allow the excision of the damaged oligonucleotide and its replacement by a new DNA fragment. In transcription, TFIIH has an essential role in transcription initiation. When the pre-initiation complex (PIC) has been established, TFIIH is required for promoter opening and promoter escape. Phosphorylation of the C-terminal tail (CTD) of the largest subunit of RNA polymerase II by the kinase module CAK controls the initiation of transcription. This Bos taurus (Bovine) protein is General transcription factor IIH subunit 3 (GTF2H3).